A 367-amino-acid polypeptide reads, in one-letter code: Quinolinate synthase (367 aa).

Iminosuccinate contacts are provided by His45 and Ser62. Residue Cys109 coordinates [4Fe-4S] cluster. Residues 140–142 (YVN) and Ser161 each bind iminosuccinate. Cys229 lines the [4Fe-4S] cluster pocket. Residues 255 to 257 (HPE) and Thr272 contribute to the iminosuccinate site. Cys319 provides a ligand contact to [4Fe-4S] cluster.

This sequence belongs to the quinolinate synthase family. Type 3 subfamily. It depends on [4Fe-4S] cluster as a cofactor.

It localises to the cytoplasm. The catalysed reaction is iminosuccinate + dihydroxyacetone phosphate = quinolinate + phosphate + 2 H2O + H(+). It participates in cofactor biosynthesis; NAD(+) biosynthesis; quinolinate from iminoaspartate: step 1/1. Functionally, catalyzes the condensation of iminoaspartate with dihydroxyacetone phosphate to form quinolinate. The chain is Quinolinate synthase from Geobacillus thermodenitrificans (strain NG80-2).